The following is a 245-amino-acid chain: MSSAQDPFYIVKEEIQDSIDKLQSTFHKWERISPDMGDQAHVAKELVATCGSIEWQVDELEKAITVAAKDPSWYGIDEAELEKRRRWTSNARTQVRNVKSGVLAGKVSSGAGHASEVRRELMRMPNSGEASRYDQYGGRDDDGFVQSESDRQMLLIKQQDEELDELSKSVQRIGGVGLTIHDELVAQERIIDELDTEMDSTKNRLEFVQKKVGMVMKKAGAKGQMMMICFLLVLFIILFVLVFLT.

The Cytoplasmic portion of the chain corresponds to 1–224 (MSSAQDPFYI…VMKKAGAKGQ (224 aa)). A t-SNARE coiled-coil homology domain is found at 153–215 (MLLIKQQDEE…EFVQKKVGMV (63 aa)). Residues 225–245 (MMMICFLLVLFIILFVLVFLT) traverse the membrane as a helical; Anchor for type IV membrane protein segment.

This sequence belongs to the syntaxin family. In terms of assembly, interacts with VTI12 and either SYP41, SYP42 or SYP51 in the trans-Golgi network or with VTI11 and SYP51 in the prevacuolar compartment to form t-SNARE complexes. Core constituent of the SNARE complex required for membrane fusion at the trans-Golgi network. Also observed in the SYP121-complex and cellulose synthases. Colocalizes with PIP2-7 and SYP121 in trafficking vesicles and at the plasma membrane. Interacts with SYP121 and PIP2-7. As to expression, expressed in root, leaf, stem, flower and silique, but not in hypocotyl or young leaf. Strong expression in the vasculature and in guard cells of the leaf epidermis.

It is found in the golgi apparatus. Its subcellular location is the trans-Golgi network membrane. The protein localises to the prevacuolar compartment membrane. Functionally, vesicle trafficking protein that functions in the secretory pathway; the fusion of phospholipid vesicles containing SYP61 and VTI12 is triggered by YKT61 and YKT62. Together with VTI12, required for membrane fusion. Involved in osmotic stress tolerance and in abscisic acid (ABA) regulation of stomatal responses. Plays a role in the exocytic trafficking of cellulose synthases (CESAs) and the transport of cell wall components to the plasma membrane. Together with SYP121, regulates the post-Golgi trafficking of the aquaporin PIP2-7 to the plasma membrane, thus modulating cell membrane water permeability. The polypeptide is Syntaxin-61 (Arabidopsis thaliana (Mouse-ear cress)).